The sequence spans 150 residues: D-aminoacyl-tRNA deacylase (150 aa).

The Gly-cisPro motif, important for rejection of L-amino acids signature appears at 138 to 139; the sequence is GP.

This sequence belongs to the DTD family. Homodimer.

Its subcellular location is the cytoplasm. The catalysed reaction is glycyl-tRNA(Ala) + H2O = tRNA(Ala) + glycine + H(+). It carries out the reaction a D-aminoacyl-tRNA + H2O = a tRNA + a D-alpha-amino acid + H(+). Its function is as follows. An aminoacyl-tRNA editing enzyme that deacylates mischarged D-aminoacyl-tRNAs. Also deacylates mischarged glycyl-tRNA(Ala), protecting cells against glycine mischarging by AlaRS. Acts via tRNA-based rather than protein-based catalysis; rejects L-amino acids rather than detecting D-amino acids in the active site. By recycling D-aminoacyl-tRNA to D-amino acids and free tRNA molecules, this enzyme counteracts the toxicity associated with the formation of D-aminoacyl-tRNA entities in vivo and helps enforce protein L-homochirality. The polypeptide is D-aminoacyl-tRNA deacylase (Akkermansia muciniphila (strain ATCC BAA-835 / DSM 22959 / JCM 33894 / BCRC 81048 / CCUG 64013 / CIP 107961 / Muc)).